The following is a 226-amino-acid chain: UPF0758 protein SE_1336 (226 aa).

An MPN domain is found at 102–224 (QITHPSDVAS…FTSLVEAGYF (123 aa)). Zn(2+) contacts are provided by His-173, His-175, and Asp-186. Residues 173–186 (HNHPSGDVTPSKED) carry the JAMM motif motif.

It belongs to the UPF0758 family.

The sequence is that of UPF0758 protein SE_1336 from Staphylococcus epidermidis (strain ATCC 12228 / FDA PCI 1200).